A 604-amino-acid chain; its full sequence is Kelch-like protein 15 (604 aa).

Residues 31–98 form the BTB domain; it reads LDVTLVIEDH…MYYGTIELSM (68 aa). The region spanning 133 to 237 is the BACK domain; sequence CAEIMRLLDD…TPTSVFEKVK (105 aa). Kelch repeat units lie at residues 328–379, 381–426, 428–473, 489–542, and 544–590; these read FVFL…VIGK, IYAV…VLNN, LFIT…NKSK, KLYV…VLDK, and IMVL…VCNL.

Homodimer. Dimerization does not affect PPP2R5B-binding, but is required for its proteasomal degradation. Interacts with CUL3. Directly interacts with PPP2R5B; this interaction leads to PPP2R5B proteasomal degradation. Interacts with RBBP8/CtIP; this interaction leads to RBBP8 proteasomal degradation. Interacts with PACMP micropeptide; interaction prevents ubiquitination and degradation of RBBP8/CtIP.

Its subcellular location is the nucleus. Its pathway is protein modification; protein ubiquitination. Substrate-specific adapter for CUL3 E3 ubiquitin-protein ligase complex. Acts as an adapter for CUL3 to target the serine/threonine-protein phosphatase 2A (PP2A) subunit PPP2R5B for ubiquitination and subsequent proteasomal degradation, thus promoting exchange with other regulatory subunits. Acts as an adapter for CUL3 to target the DNA-end resection factor RBBP8/CtIP for ubiquitination and subsequent proteasomal degradation. Through the regulation of RBBP8/CtIP protein turnover, plays a key role in DNA damage response, favoring DNA double-strand repair through error-prone non-homologous end joining (NHEJ) over error-free, RBBP8-mediated homologous recombination (HR). This Homo sapiens (Human) protein is Kelch-like protein 15 (KLHL15).